Reading from the N-terminus, the 70-residue chain is MKARLLLLSVVILVGMVSAENEKAGSCPDVNQPIPPLGLCRNMCESDSGCPNNEKCCKNGCGFMTCSRPR.

The first 19 residues, 1–19 (MKARLLLLSVVILVGMVSA), serve as a signal peptide directing secretion. Residues 20–70 (ENEKAGSCPDVNQPIPPLGLCRNMCESDSGCPNNEKCCKNGCGFMTCSRPR) form the WAP domain. 4 disulfides stabilise this stretch: Cys27/Cys57, Cys40/Cys61, Cys44/Cys56, and Cys50/Cys66.

It belongs to the venom waprin family. In terms of tissue distribution, expressed by the venom gland.

Its subcellular location is the secreted. Its function is as follows. Damages membranes of susceptible bacteria. Has no hemolytic activity. Not toxic to mice. Does not inhibit the proteinases elastase and cathepsin G. In Thrasops jacksonii (Jackson's black tree snake), this protein is Waprin-Thr1.